A 302-amino-acid polypeptide reads, in one-letter code: Protein FLOURY 1 (302 aa).

The next 2 membrane-spanning stretches (helical) occupy residues 27–47 and 82–102; these read SAGA…VAVL and LAGS…FLAV. The interval 160-195 is disordered; it reads SSKPVSRSLAAEFDQEADGEEEDNAGETSDPDDGSV. Acidic residues predominate over residues 172 to 192; that stretch reads FDQEADGEEEDNAGETSDPDD. A GTD-binding domain is found at 193–299; it reads GSVQYLRRRL…ALSETSEDDR (107 aa). Residues 199-254 adopt a coiled-coil conformation; the sequence is RRRLKEEMLLKEVALEELEKERHAAASAADEAMSKIACLRSEKALVEREARQFQEM. A disordered region spans residues 283–302; it reads PEAITDRALSETSEDDRDKK.

In terms of assembly, interacts (via C-terminus) with both 22 kDa and 19 kDa alpha-zeins. Interacts (via C-terminus) with OP10 (via N-terminus). As to expression, expressed in endosperm. Not detected in embryo, leaves and roots.

The protein resides in the endoplasmic reticulum membrane. In terms of biological role, involved in protein body development and 22 kDa alpha-zein localization. This Zea mays (Maize) protein is Protein FLOURY 1.